Reading from the N-terminus, the 336-residue chain is MCGRTACTLAPDDVSKACSYQDKQGRQKCPKWRDGDTDKYQPSYNKSPQSNNPVLLSLKHFQKDADSSERVLAAMRWGLIPSWFNELDPSKMQYKTNNCRSDTITEKALYKAPLFKGRRCVVLADGFYEWKRQDGEKQPYYIYFPQIKSEKFPEEQDMMDWNGQRLLTMAGLFDCWEPPSGGEPLYSYTVITVDSSKTMNCIHDRMPAILDGDEAIRKWLDFGEVSTQDALKLIHPIENITYHPVSTVVNNSRNNSTECIAAVILTQKKGPALSASSKKMLEWLQNKSPKKEESRSIIQSPKLSQFGAPPKKTSAGLMQQWLKKEDGEPSPKRAKK.

Cysteine 2 acts as the Nucleophile in catalysis. Cysteine 2 is subject to Thiazolidine linkage to a ring-opened DNA abasic site. Residues 26 to 51 (RQKCPKWRDGDTDKYQPSYNKSPQSN) form a disordered region. Residues 40 to 51 (YQPSYNKSPQSN) are compositionally biased toward polar residues. Glutamate 129 is an active-site residue. Residues 285-336 (QNKSPKKEESRSIIQSPKLSQFGAPPKKTSAGLMQQWLKKEDGEPSPKRAKK) form a disordered region. The span at 322-336 (LKKEDGEPSPKRAKK) shows a compositional bias: basic and acidic residues.

Belongs to the SOS response-associated peptidase family. Post-translationally, ubiquitination of the hmces DNA-protein cross-link by rfwd3 may promotes its degradation.

The protein resides in the chromosome. Formation and reversal of DNA-protein cross-link depends on DNA context. Catalyzes formation of the thiazolidine linkage in presence of abasic sites in single-stranded DNA. Mediates the reversal of the thiazolidine cross-link in presence of double stranded DNA. Sensor of abasic sites in single-stranded DNA (ssDNA) required to preserve genome integrity by promoting error-free repair of abasic sites. Acts as an enzyme that recognizes and binds abasic sites in ssDNA at replication forks and chemically modifies the lesion by forming a covalent cross-link with DNA: forms a stable thiazolidine linkage between a ring-opened abasic site and the alpha-amino and sulfhydryl substituents of its N-terminal catalytic cysteine residue. The hmces DNA-protein cross-link is then either reversed or degraded. Hmces is able to catalyze the reversal of its thiazolidine cross-link and cycle between a cross-link and a non-cross-linked state depending on DNA context: mediates self-reversal of the thiazolidine cross-link in double stranded DNA, allowing apex1 to initiate downstream repair of abasic sites. The hmces DNA-protein cross-link can also be degraded by the sprtn metalloprotease following unfolding by the brip1/fancj helicase. Promotes error-free repair of abasic sites by protecting abasic sites from translesion synthesis (TLS) polymerases and endonucleases that are error-prone and would generate mutations and double-strand breaks. Acts as a protease: mediates autocatalytic processing of its N-terminal methionine in order to expose the catalytic cysteine. The HMCES DNA-protein cross-link is then either reversed or degraded. According to a model, the HMCES DNA-protein cross-link. In Xenopus laevis (African clawed frog), this protein is Abasic site processing protein HMCES.